The primary structure comprises 380 residues: Cytochrome b (380 aa).

Transmembrane regions (helical) follow at residues Phe-34–Met-54, Trp-78–Ile-99, Trp-114–Leu-134, and Phe-179–Thr-199. Heme b-binding residues include His-84 and His-98. Residues His-183 and His-197 each contribute to the heme b site. A ubiquinone is bound at residue His-202. The next 4 membrane-spanning stretches (helical) occupy residues Leu-227 to Ser-247, Leu-289 to His-309, Ile-321 to Ser-341, and Phe-348 to Pro-368.

Belongs to the cytochrome b family. The cytochrome bc1 complex contains 11 subunits: 3 respiratory subunits (MT-CYB, CYC1 and UQCRFS1), 2 core proteins (UQCRC1 and UQCRC2) and 6 low-molecular weight proteins (UQCRH/QCR6, UQCRB/QCR7, UQCRQ/QCR8, UQCR10/QCR9, UQCR11/QCR10 and a cleavage product of UQCRFS1). This cytochrome bc1 complex then forms a dimer. It depends on heme b as a cofactor.

Its subcellular location is the mitochondrion inner membrane. Functionally, component of the ubiquinol-cytochrome c reductase complex (complex III or cytochrome b-c1 complex) that is part of the mitochondrial respiratory chain. The b-c1 complex mediates electron transfer from ubiquinol to cytochrome c. Contributes to the generation of a proton gradient across the mitochondrial membrane that is then used for ATP synthesis. This chain is Cytochrome b (MT-CYB), found in Pelecanoides urinatrix (Common diving petrel).